We begin with the raw amino-acid sequence, 264 residues long: Somatomedin-B and thrombospondin type-1 domain-containing protein (264 aa).

A signal peptide spans 1-20; sequence MKTLWMVLCALARLWPGALA. In terms of domain architecture, SMB spans 24–75; sequence EAGRCCPGRDPACFARGWRLDRVYGTCFCDQACRLTGDCCFDYDRACPARPC. Cystine bridges form between Cys-28–Cys-36, Cys-28–Cys-52, Cys-36–Cys-70, Cys-50–Cys-52, Cys-50–Cys-63, Cys-56–Cys-62, and Cys-63–Cys-70. Positions 74 to 125 constitute a TSP type-1 domain; sequence PCFVGEWSPWSGCAGQCQPTTRVRRRSVRQEPLNGGAPCPPLEERAGCLEYS. N-linked (GlcNAc...) asparagine glycosylation occurs at Asn-227.

It belongs to the thrombospondin family.

The protein resides in the secreted. Its subcellular location is the extracellular space. It localises to the extracellular matrix. The polypeptide is Somatomedin-B and thrombospondin type-1 domain-containing protein (Sbspon) (Mus musculus (Mouse)).